Reading from the N-terminus, the 694-residue chain is Acetolactate synthase catalytic subunit, mitochondrial (694 aa).

The transit peptide at 1–42 (MLRSRQATNALRAVGQTRPLRSQTAVAFTQSLNKVPSNRRSE) directs the protein to the mitochondrion. Residues 45-58 (VATASSTASGAFNS) are compositionally biased toward low complexity. The interval 45 to 69 (VATASSTASGAFNSQVRPTPSPTFN) is disordered. Positions 59-69 (QVRPTPSPTFN) are enriched in polar residues. Thiamine diphosphate is bound at residue Glu-140. FAD is bound by residues Arg-242, 358-379 (HGSA…LGGR), and 410-429 (EIMP…IVGD). Positions 505-585 (QHQMWTAQHF…VKVIVLNNEE (81 aa)) are thiamine pyrophosphate binding. Mg(2+)-binding residues include Asp-556, Asn-583, and Glu-585.

The protein belongs to the TPP enzyme family. Homodimer. The cofactor is Mg(2+). Thiamine diphosphate is required as a cofactor.

The protein localises to the mitochondrion. The enzyme catalyses 2 pyruvate + H(+) = (2S)-2-acetolactate + CO2. The catalysed reaction is 2-oxobutanoate + pyruvate + H(+) = (S)-2-ethyl-2-hydroxy-3-oxobutanoate + CO2. The protein operates within amino-acid biosynthesis; L-isoleucine biosynthesis; L-isoleucine from 2-oxobutanoate: step 1/4. It participates in amino-acid biosynthesis; L-valine biosynthesis; L-valine from pyruvate: step 1/4. In terms of biological role, acetolactate synthase catalytic subunit, mitochondrial; part of the gene cluster that mediates the biosynthesis of chlorflavonin, a fungal flavonoid with acetolactate synthase inhibitory activity. Is not direcly involved in chlorflavonin biosynthesis but acts as a self-resistant protein that effectively confers chlorflavonin resistance to the native host. As a catalytic subunit of mitochondrial acetolactate synthase, catalyzes the first of a series of common steps in the biosynthesis of the branched-chain amino acids. Catalyzes the irreversible decarboxylation of pyruvate to a bound hydroxyethyl group that then condenses with either a second pyruvate molecule to form 2-acetolactate (AL) or with 2-ketobutyrate to form 2-aceto-2-hydroxybutyrate (AHB). The first product is the precursor for valine and leucine biosynthesis, while the second leads to isoleucine. In Aspergillus candidus, this protein is Acetolactate synthase catalytic subunit, mitochondrial.